Reading from the N-terminus, the 173-residue chain is Calcium-binding protein 5 (173 aa).

EF-hand domains are found at residues 28-63 (DEIE…MGYM), 82-99 (GRVD…KLLA), 105-140 (IGVQ…LLGD), and 142-173 (LTSQ…MMSR). Ca(2+) is bound by residues Asp41, Asp43, Asp45, and Asp52. Residues Asp118, Asn120, Asp122, Glu124, Glu129, Asp155, Asn157, Asp159, Thr161, and Glu166 each contribute to the Ca(2+) site.

As to quaternary structure, interacts with CACNA1C (via C-terminal CDB motif) in a calcium-dependent manner. Interacts with STXBP1. Interacts with MYO6. Expressed in the retina (at protein level).

It localises to the cytoplasm. Inhibits calcium-dependent inactivation of L-type calcium channel and shifts voltage dependence of activation to more depolarized membrane potentials. Involved in the transmission of light signals. May positively regulate neurotransmitter vesicle endocytosis and exocytosis in a salt-dependent manner. May play a role in the extension and network organization of neurites. The sequence is that of Calcium-binding protein 5 (CABP5) from Bos taurus (Bovine).